A 376-amino-acid polypeptide reads, in one-letter code: Lactosylceramide 1,3-N-acetyl-beta-D-glucosaminyltransferase (376 aa).

Over 1–13 (MRLFVSRRVKRWK) the chain is Cytoplasmic. The helical; Signal-anchor for type II membrane protein transmembrane segment at 14–34 (IFHFFVTCFILSFMVFWSPIN) threads the bilayer. Residues 35–376 (NYIMSHMKSY…NSYPCWAAFA (342 aa)) lie on the Lumenal side of the membrane. N57 is a glycosylation site (N-linked (GlcNAc...) asparagine).

It belongs to the glycosyltransferase 31 family. In terms of tissue distribution, highly expressed in adult spleen, placenta and cerebellar Purkinje cells where it colocalizes with HNK-1. Expressed at lower level in brain, lung, thymus and muscle.

The protein localises to the golgi apparatus membrane. The catalysed reaction is a beta-D-Gal-(1-&gt;4)-beta-D-Glc-(1&lt;-&gt;1)-Cer(d18:1(4E)) + UDP-N-acetyl-alpha-D-glucosamine = a beta-D-GlcNAc-(1-&gt;3)-beta-D-Gal-(1-&gt;4)-beta-D-Glc-(1&lt;-&gt;1)-Cer(d18:1(4E)) + UDP + H(+). It catalyses the reaction a neolactoside nLc4Cer(d18:1(4E)) + UDP-N-acetyl-alpha-D-glucosamine = a neolactoside IV(3)-beta-GlcNAc-nLc4Cer(d18:1(4E)) + UDP + H(+). The protein operates within protein modification; protein glycosylation. Functionally, beta-1,3-N-acetylglucosaminyltransferase that plays a key role in the synthesis of lacto- or neolacto-series carbohydrate chains on glycolipids, notably by participating in biosynthesis of HNK-1 and Lewis X carbohydrate structures. Has strong activity toward lactosylceramide (LacCer) and neolactotetraosylceramide (nLc(4)Cer; paragloboside), resulting in the synthesis of Lc(3)Cer and neolactopentaosylceramide (nLc(5)Cer), respectively. Plays a central role in regulating neolacto-series glycolipid synthesis during embryonic development. This Mus musculus (Mouse) protein is Lactosylceramide 1,3-N-acetyl-beta-D-glucosaminyltransferase.